The sequence spans 447 residues: N-succinylarginine dihydrolase (447 aa).

Substrate-binding positions include 19-28 (AGLSFGNEAS), N110, and 137-138 (HR). E174 is an active-site residue. R212 is a binding site for substrate. Residue H248 is part of the active site. D250 and N359 together coordinate substrate. Catalysis depends on C365, which acts as the Nucleophile.

The protein belongs to the succinylarginine dihydrolase family. As to quaternary structure, homodimer.

The enzyme catalyses N(2)-succinyl-L-arginine + 2 H2O + 2 H(+) = N(2)-succinyl-L-ornithine + 2 NH4(+) + CO2. It participates in amino-acid degradation; L-arginine degradation via AST pathway; L-glutamate and succinate from L-arginine: step 2/5. Catalyzes the hydrolysis of N(2)-succinylarginine into N(2)-succinylornithine, ammonia and CO(2). The chain is N-succinylarginine dihydrolase from Salmonella gallinarum (strain 287/91 / NCTC 13346).